Reading from the N-terminus, the 81-residue chain is Small serum protein 4 (81 aa).

The signal sequence occupies residues 1 to 19 (MKVFFILIIFSFTLATCQG). 3 disulfides stabilise this stretch: C21–C74, C41–C66, and C64–C73.

This sequence belongs to the beta-microseminoprotein family.

It localises to the secreted. In terms of biological role, shows an slight inhibitory effect toward the metalloproteinase brevilysin H6, but does not inhibit the metalloproteinases thermolysin, HR1A and HR1B. This Protobothrops flavoviridis (Habu) protein is Small serum protein 4.